The sequence spans 151 residues: Large ribosomal subunit protein bL9 (151 aa).

Belongs to the bacterial ribosomal protein bL9 family.

In terms of biological role, binds to the 23S rRNA. The chain is Large ribosomal subunit protein bL9 from Desulfosudis oleivorans (strain DSM 6200 / JCM 39069 / Hxd3) (Desulfococcus oleovorans).